The following is a 406-amino-acid chain: Ubiquitin-like modifier-activating enzyme 5 (406 aa).

Gly-82, Asp-103, Lys-126, Asn-149, and Asn-183 together coordinate ATP. Zn(2+)-binding residues include Cys-225 and Cys-228. The active-site Glycyl thioester intermediate is the Cys-249. The Zn(2+) site is built by Cys-302 and Cys-307. Residues 373 to 397 (EAPSKSTETTSEATTTTTGDETSLD) form a disordered region. Positions 378 to 393 (STETTSEATTTTTGDE) are enriched in low complexity.

The protein belongs to the ubiquitin-activating E1 family. UBA5 subfamily.

Functionally, E1-like enzyme which activates UFM1. The sequence is that of Ubiquitin-like modifier-activating enzyme 5 from Drosophila willistoni (Fruit fly).